The sequence spans 885 residues: DNA-directed RNA polymerase subunit Rpo1N (885 aa).

Zn(2+)-binding residues include Cys60, Cys63, Cys70, His73, Cys100, Cys103, Cys150, and Cys153. 3 residues coordinate Mg(2+): Asp464, Asp466, and Asp468.

Belongs to the RNA polymerase beta' chain family. As to quaternary structure, part of the RNA polymerase complex. Mg(2+) is required as a cofactor. It depends on Zn(2+) as a cofactor.

Its subcellular location is the cytoplasm. It carries out the reaction RNA(n) + a ribonucleoside 5'-triphosphate = RNA(n+1) + diphosphate. In terms of biological role, DNA-dependent RNA polymerase (RNAP) catalyzes the transcription of DNA into RNA using the four ribonucleoside triphosphates as substrates. Forms the clamp head domain. The polypeptide is DNA-directed RNA polymerase subunit Rpo1N (Thermoplasma acidophilum (strain ATCC 25905 / DSM 1728 / JCM 9062 / NBRC 15155 / AMRC-C165)).